Consider the following 512-residue polypeptide: Cytochrome P450 77A4 (512 aa).

Residues 9-29 (PTSLDFTFFAIIISGFVFIIT) form a helical membrane-spanning segment. Cysteine 456 serves as a coordination point for heme.

This sequence belongs to the cytochrome P450 family. Heme is required as a cofactor.

Its subcellular location is the membrane. In terms of biological role, catalyzes the epoxidation of physiological unsaturated fatty acids in vitro. Can use laurate, oleate, linoleate, linolenate and vernolate as substrate. The protein is Cytochrome P450 77A4 (CYP77A4) of Arabidopsis thaliana (Mouse-ear cress).